The following is a 95-amino-acid chain: Protein TusB (95 aa).

Belongs to the DsrH/TusB family. Heterohexamer, formed by a dimer of trimers. The hexameric TusBCD complex contains 2 copies each of TusB, TusC and TusD. The TusBCD complex interacts with TusE.

Its subcellular location is the cytoplasm. Functionally, part of a sulfur-relay system required for 2-thiolation of 5-methylaminomethyl-2-thiouridine (mnm(5)s(2)U) at tRNA wobble positions. The sequence is that of Protein TusB from Shigella flexneri.